The primary structure comprises 574 residues: MSSGIILLLVAIVLLVIIAYVVGVVIRKRNDTLIANLETRKQELVDLPVQEEIEQVKLLHLIGQSQSTFREWNQKWTDLSTNSFKDIDFHLVEAENLNDSFNFVRAKHEIDNVDSQLTIIEEDIVSIREALEVLKEQEEKNSARVTHALDLYETLQKSISEKEDNYGTTMPEIEKQLKNIEAEFSHFVTLNSTGDPIEASEVLNKAEEHTIALGQITEQIPAIVAKLEDDFPDQLDDLETGYRRLLEENYHFPEKDIEQRFQEVREAIRSNSDGLVSLDLDRARDENEHIQEKIDKLYDIFEREIAAYKVAHKDSKIIPQFLAHAKSNNEQLGHEIKRLSAKYILNENESLSLRSFTNDLEEIETKVLPSVENFGQEASPYTHLQILFERTLKTLTTVEENQMEVFEAVKTIESVETRARQNMDKYVNKLHMIKRFMEKRNLPGIPQDFLSTFFTTSSQIEALINELSRGRIDIEAVSRLNDVTTNAIANLEQATYLVVQDATLTEQLLQYSNRYRSFEQNVQKSFEQALYLFEVEHNYKASFDEISYALETVEPGVTDRFVTSYEKTQERIRF.

Topologically, residues 1-7 (MSSGIIL) are extracellular. The chain crosses the membrane as a helical span at residues 8 to 26 (LLVAIVLLVIIAYVVGVVI). Topologically, residues 27–574 (RKRNDTLIAN…YEKTQERIRF (548 aa)) are cytoplasmic. Coiled-coil stretches lie at residues 104 to 141 (VRAK…EEKN), 275 to 343 (LVSL…SAKY), and 473 to 525 (DIEA…VQKS).

The protein belongs to the EzrA family.

It is found in the cell membrane. Negative regulator of FtsZ ring formation; modulates the frequency and position of FtsZ ring formation. Inhibits FtsZ ring formation at polar sites. Interacts either with FtsZ or with one of its binding partners to promote depolymerization. This chain is Septation ring formation regulator EzrA, found in Streptococcus agalactiae serotype III (strain NEM316).